Consider the following 518-residue polypeptide: ATP synthase subunit alpha (518 aa).

169–176 (GDRQTGKT) serves as a coordination point for ATP.

Belongs to the ATPase alpha/beta chains family. In terms of assembly, F-type ATPases have 2 components, CF(1) - the catalytic core - and CF(0) - the membrane proton channel. CF(1) has five subunits: alpha(3), beta(3), gamma(1), delta(1), epsilon(1). CF(0) has three main subunits: a(1), b(2) and c(9-12). The alpha and beta chains form an alternating ring which encloses part of the gamma chain. CF(1) is attached to CF(0) by a central stalk formed by the gamma and epsilon chains, while a peripheral stalk is formed by the delta and b chains.

It localises to the cell membrane. The catalysed reaction is ATP + H2O + 4 H(+)(in) = ADP + phosphate + 5 H(+)(out). Functionally, produces ATP from ADP in the presence of a proton gradient across the membrane. The alpha chain is a regulatory subunit. The protein is ATP synthase subunit alpha of Mycoplasma genitalium (strain ATCC 33530 / DSM 19775 / NCTC 10195 / G37) (Mycoplasmoides genitalium).